Here is a 137-residue protein sequence, read N- to C-terminus: Large ribosomal subunit protein eL28 (137 aa).

Ser2 is subject to N-acetylserine. Glycyl lysine isopeptide (Lys-Gly) (interchain with G-Cter in SUMO2) cross-links involve residues Lys58 and Lys65. Ser115 is subject to Phosphoserine.

Belongs to the eukaryotic ribosomal protein eL28 family. In terms of assembly, component of the large ribosomal subunit.

The protein localises to the cytoplasm. Its function is as follows. Component of the large ribosomal subunit. The ribosome is a large ribonucleoprotein complex responsible for the synthesis of proteins in the cell. In Bos taurus (Bovine), this protein is Large ribosomal subunit protein eL28 (RPL28).